Reading from the N-terminus, the 380-residue chain is MANLRKTHPLLKIANDALVDLPAPSNISIWWNFGSLLGLCLAIQLLTGLFLAMHYTADIATAFSSVAHICRDVNFGWLIRNMHANGASFFFICIYLHIGRGLYYGSYMFKETWNVGVVLLLLVMMTAFVGYVLPWGQMSFWGATVITNLLSAVPYVGNTLVQWIWGGFSVDNATLTRFFAFHFLLPFVIAAATLLHLLFLHETGSNNPVGLNPNADKIPFHPYFTYKDLLGFIVLFLALASLALFSPNYLGDPDNFTPANPLVTPPHIKPEWYFLFAYAILRSIPNKLGGVLALLASILILMLVPILHTSKHRSLTFRPFSQIIFWTLVADVAILTWIGGMPVEDPYIIIGQIASALYFLIFLVFFPLSGWLENKLLGLS.

4 consecutive transmembrane segments (helical) span residues 33 to 53 (FGSLLGLCLAIQLLTGLFLAM), 77 to 98 (WLIRNMHANGASFFFICIYLHI), 113 to 133 (WNVGVVLLLLVMMTAFVGYVL), and 178 to 198 (FFAFHFLLPFVIAAATLLHLL). 2 residues coordinate heme b: histidine 83 and histidine 97. Heme b contacts are provided by histidine 182 and histidine 196. An a ubiquinone-binding site is contributed by histidine 201. 4 helical membrane-spanning segments follow: residues 226–246 (YKDLLGFIVLFLALASLALFS), 288–308 (LGGVLALLASILILMLVPILH), 320–340 (FSQIIFWTLVADVAILTWIGG), and 347–367 (YIIIGQIASALYFLIFLVFFP).

It belongs to the cytochrome b family. In terms of assembly, the cytochrome bc1 complex contains 3 respiratory subunits (MT-CYB, CYC1 and UQCRFS1), 2 core proteins (UQCRC1 and UQCRC2) and probably 6 low-molecular weight proteins. Heme b serves as cofactor.

It localises to the mitochondrion inner membrane. Functionally, component of the ubiquinol-cytochrome c reductase complex (complex III or cytochrome b-c1 complex) that is part of the mitochondrial respiratory chain. The b-c1 complex mediates electron transfer from ubiquinol to cytochrome c. Contributes to the generation of a proton gradient across the mitochondrial membrane that is then used for ATP synthesis. This is Cytochrome b (mt-cyb) from Apogon semilineatus (Half-lined cardinal).